The following is a 283-amino-acid chain: Non-selective voltage-gated ion channel VDAC3 (283 aa).

Cysteine 2 carries the N-acetylcysteine modification. Threonine 4 carries the phosphothreonine modification. N6-acetyllysine occurs at positions 12, 15, and 20. 2 beta stranded membrane passes run 26 to 35 (MVKIDLRTKS) and 39 to 47 (VEFSTSGHA). A Glycyl lysine isopeptide (Lys-Gly) (interchain with G-Cter in ubiquitin) cross-link involves residue lysine 53. 3 consecutive transmembrane segments (beta stranded) span residues 54–64 (ASGNLETKYKV), 69–76 (LTFTQKWN), and 80–89 (TLGTEISLEN). N6-acetyllysine is present on lysine 90. Residues 95 to 104 (LKLTLDTIFV) traverse the membrane as a beta stranded segment. Residues lysine 109 and lysine 110 each participate in a glycyl lysine isopeptide (Lys-Gly) (interchain with G-Cter in ubiquitin) cross-link. Transmembrane regions (beta stranded) follow at residues 111-120 (SGKLKASYKR), 123-130 (FSLGSNVD), 137-145 (TIYGWAVLA), 150-158 (LAGYQMSFD), 163-175 (KLSQ…GYKA), 178-185 (FQLHTHVN), 189-198 (EFGGSIYQKV), 202-211 (IETSINLAWT), 218-227 (RFGIAAKYKL), and 231-238 (TSLSAKVN). Serine 241 is modified (phosphoserine). Residues 242 to 244 (LIG) and 260 to 264 (SALID) each bind NAD(+). A run of 2 beta stranded transmembrane segments spans residues 242–251 (LIGLGYTQTL) and 254–263 (GVKLTLSALI). Lysine 266 bears the N6-acetyllysine; alternate mark. A Glycyl lysine isopeptide (Lys-Gly) (interchain with G-Cter in ubiquitin); alternate cross-link involves residue lysine 266. The chain crosses the membrane as a beta stranded span at residues 273 to 282 (HKVGLGFELE).

This sequence belongs to the eukaryotic mitochondrial porin family. In terms of assembly, interacts with ARMC12 in a TBC1D21-dependent manner. Interacts with MISFA. Post-translationally, ubiquitinated by PRKN during mitophagy, leading to its degradation and enhancement of mitophagy. Deubiquitinated by USP30.

The protein resides in the mitochondrion outer membrane. Its subcellular location is the membrane. The catalysed reaction is chloride(in) = chloride(out). The enzyme catalyses K(+)(in) = K(+)(out). In terms of biological role, non-selective voltage-gated ion channel that mediates the transport of anions and cations through the mitochondrion outer membrane and plasma membrane. Forms a high-conducting channel with a stable open state and a voltage-induced closure with a mild preference for anions over cations. Involved in male fertility and sperm mitochondrial sheath formation. The chain is Non-selective voltage-gated ion channel VDAC3 from Oryctolagus cuniculus (Rabbit).